The following is a 150-amino-acid chain: MLWSFNNHFVIDNSFKQEYDKPNITAFFNRSLQFFQENSLVLKPELFSLQKYTKDVYGLNVINQLNLNKHPMLIPLTWDKKQKFISFIESCVQKYSQVKKDNQVFSLTVGKRVFFLLLINKQFKQIKLETALKYLGFKTSLGAMDSTTES.

This is an uncharacterized protein from Mycoplasma genitalium (strain ATCC 33530 / DSM 19775 / NCTC 10195 / G37) (Mycoplasmoides genitalium).